We begin with the raw amino-acid sequence, 592 residues long: Guanylate-binding protein 1 (592 aa).

The tract at residues 1 to 311 (MASEIHMTGP…NAISSGDLPC (311 aa)) is GTPase domain (Globular). The GB1/RHD3-type G domain maps to 35–278 (TQPMVVVAIV…FCSYIFSNSK (244 aa)). GTP contacts are provided by residues 45–52 (GLYRTGKS), 67–69 (LGS), and 97–101 (DTEGL). A Phosphoserine modification is found at Ser-156. Cys-589 carries the cysteine methyl ester modification. A lipid anchor (S-farnesyl cysteine) is attached at Cys-589. Thr-590 carries the phosphothreonine modification. A propeptide spans 590 to 592 (TIS) (removed in mature form).

The protein belongs to the TRAFAC class dynamin-like GTPase superfamily. GB1/RHD3 GTPase family. GB1 subfamily. As to quaternary structure, homodimer; homodimerization occurs upon GTP-binding and is required for the second hydrolysis step from GDP to GMP. Undergoes conformational changes and oligomerization upon GTP-binding and hydrolysis. Heterodimer with other family members, including GBP2, GBP3, GBP4 and GBP5. Dimerization regulates subcellular location to membranous structures. Interacts with SQSTM1. Interacts (when phosphorylated) with 14-3-3 protein sigma (SFN); leading to GBP1 retention in the cytosol and inactivation. Isoprenylation is required for proper subcellular location. Post-translationally, phosphorylated at Ser-156 by PIM1 in absence of infection, inhibits GBP1: phosphorylation promotes interaction with 14-3-3 protein sigma (SFN), leading to GBP1 retention in the cytosol. Dephosphorylated in response to infection, liberating GBP1.

It is found in the cytoplasmic vesicle membrane. The protein localises to the golgi apparatus membrane. The protein resides in the cell membrane. It localises to the cytoplasm. Its subcellular location is the cytosol. It is found in the secreted. The enzyme catalyses GTP + H2O = GDP + phosphate + H(+). The catalysed reaction is GDP + H2O = GMP + phosphate + H(+). Functionally, interferon (IFN)-inducible GTPase that plays important roles in innate immunity against a diverse range of bacterial, viral and protozoan pathogens. Hydrolyzes GTP to GMP in two consecutive cleavage reactions: GTP is first hydrolyzed to GDP and then to GMP in a processive manner. Following infection, recruited to the pathogen-containing vacuoles or vacuole-escaped bacteria and promotes both inflammasome assembly and autophagy. Acts as a positive regulator of inflammasome assembly by facilitating the detection of inflammasome ligands from pathogens. Involved in the lysis of pathogen-containing vacuoles, releasing pathogens into the cytosol. Following pathogen release in the cytosol, forms a protein coat in a GTPase-dependent manner that encapsulates pathogens and promotes the detection of ligands by pattern recognition receptors. Plays a key role in inflammasome assembly in response to infection by Gram-negative bacteria: following pathogen release in the cytosol, forms a protein coat that encapsulates Gram-negative bacteria and directly binds to lipopolysaccharide (LPS), disrupting the O-antigen barrier and unmasking lipid A that is that detected by the non-canonical inflammasome effector CASP4/CASP11. Also promotes recruitment of proteins that mediate bacterial cytolysis, leading to release double-stranded DNA (dsDNA) that activates the AIM2 inflammasome. Involved in autophagy by regulating bacteriolytic peptide generation via its interaction with ubiquitin-binding protein SQSTM1, which delivers monoubiquitinated proteins to autolysosomes for the generation of bacteriolytic peptides. Confers protection to several pathogens, including the bacterial pathogens L.monocytogenes and M.bovis BCG as well as the protozoan pathogen T.gondii. Exhibits antiviral activity against influenza virus. This is Guanylate-binding protein 1 (GBP1) from Pongo abelii (Sumatran orangutan).